Reading from the N-terminus, the 467-residue chain is Gamma-aminobutyric acid receptor subunit gamma-3 (467 aa).

The first 17 residues, 1-17 (MAAKLLLLLCLFSGLHA), serve as a signal peptide directing secretion. The Extracellular portion of the chain corresponds to 18-256 (RSRRVEEDEN…FELSRRMGYF (239 aa)). The N-linked (GlcNAc...) asparagine glycan is linked to Asn-110. Residues Cys-171 and Cys-185 are joined by a disulfide bond. N-linked (GlcNAc...) asparagine glycosylation is present at Asn-228. The helical transmembrane segment at 257 to 277 (TIQTYIPCILTVVLSWVSFWI) threads the bilayer. Residues 278-283 (KKDATP) are Cytoplasmic-facing. The helical transmembrane segment at 284–303 (ARTTLGITTVLTMTTLSTIA) threads the bilayer. At 304–311 (RKSLPRVS) the chain is on the extracellular side. Residues 312 to 332 (YVTAMDLFVTVCFLFVFAALM) form a helical membrane-spanning segment. Residues 333 to 446 (EYATLNYYSS…DVSELDSYSR (114 aa)) are Cytoplasmic-facing. Residues 447 to 467 (VFFPTSFLLFNLVYWVGYLYL) form a helical membrane-spanning segment.

The protein belongs to the ligand-gated ion channel (TC 1.A.9) family. Gamma-aminobutyric acid receptor (TC 1.A.9.5) subfamily. GABRG3 sub-subfamily. Heteropentamer, formed by a combination of alpha (GABRA1-6), beta (GABRB1-3), gamma (GABRG1-3), delta (GABRD), epsilon (GABRE), rho (GABRR1-3), pi (GABRP) and theta (GABRQ) chains, each subunit exhibiting distinct physiological and pharmacological properties. In terms of processing, may be palmitoylated. In terms of tissue distribution, expressed in brain.

Its subcellular location is the postsynaptic cell membrane. It localises to the cell membrane. The catalysed reaction is chloride(in) = chloride(out). Gamma subunit of the heteropentameric ligand-gated chloride channel gated by gamma-aminobutyric acid (GABA), a major inhibitory neurotransmitter in the brain. GABA-gated chloride channels, also named GABA(A) receptors (GABAAR), consist of five subunits arranged around a central pore and contain GABA active binding site(s) located at the alpha and beta subunit interface(s). When activated by GABA, GABAARs selectively allow the flow of chloride across the cell membrane down their electrochemical gradient. The sequence is that of Gamma-aminobutyric acid receptor subunit gamma-3 from Mus musculus (Mouse).